The sequence spans 198 residues: IMP cyclohydrolase (198 aa).

It belongs to the archaeal IMP cyclohydrolase family.

It carries out the reaction IMP + H2O = 5-formamido-1-(5-phospho-D-ribosyl)imidazole-4-carboxamide. It participates in purine metabolism; IMP biosynthesis via de novo pathway; IMP from 5-formamido-1-(5-phospho-D-ribosyl)imidazole-4-carboxamide: step 1/1. In terms of biological role, catalyzes the cyclization of 5-formylamidoimidazole-4-carboxamide ribonucleotide to IMP. This chain is IMP cyclohydrolase, found in Thermococcus kodakarensis (strain ATCC BAA-918 / JCM 12380 / KOD1) (Pyrococcus kodakaraensis (strain KOD1)).